Here is a 388-residue protein sequence, read N- to C-terminus: 5-hydroxytryptamine receptor 1B (388 aa).

The disordered stretch occupies residues 1–29 (MEQPSRLCSPPASGSLTSSQTNHSTFPNP). Residues 1–45 (MEQPSRLCSPPASGSLTSSQTNHSTFPNPNCSAPDLEPYQDSIAL) lie on the Extracellular side of the membrane. The span at 12-29 (ASGSLTSSQTNHSTFPNP) shows a compositional bias: polar residues. 2 N-linked (GlcNAc...) asparagine glycosylation sites follow: Asn-22 and Asn-30. The helical transmembrane segment at 46-71 (PWKVLLATFLGLITLGTTLSNAFVIA) threads the bilayer. At 72 to 85 (TVSRTRKLHTPANY) the chain is on the cytoplasmic side. A helical transmembrane segment spans residues 86–110 (LIASLAVTDLLVSILVMPISTMYTV). Residues 111-118 (TGRWTLGQ) are Extracellular-facing. A helical membrane pass occupies residues 119–144 (VVCDFWLSSDITCCTASILHLCVIAL). Cysteines 121 and 197 form a disulfide. The ergotamine site is built by Asp-128 and Thr-133. Positions 145–147 (DRY) match the DRY motif; important for ligand-induced conformation changes and signaling motif. Residues 145–164 (DRYWAITDAVEYSAKRTPKR) are Cytoplasmic-facing. The helical transmembrane segment at 165–183 (AAGMIIMVWVFSVSISMPP) threads the bilayer. Topologically, residues 184–203 (LFWRQAKAEEVADCSVNTDH) are extracellular. Val-199 contacts ergotamine. The helical transmembrane segment at 204-227 (ILYTVYSTVGAFYFPTLLLIALYG) threads the bilayer. Residues 228-313 (RIYVEARSRI…AARERKATRT (86 aa)) lie on the Cytoplasmic side of the membrane. The segment at 249-282 (LTRAQLITDSPGSSSSGTSINSRAPEGPSESGSP) is disordered. Low complexity predominate over residues 255-270 (ITDSPGSSSSGTSINS). A helical transmembrane segment spans residues 314-335 (LGIILGAFIVCWLPFFIISLAL). Residues 336 to 345 (PICDDACWFH) lie on the Extracellular side of the membrane. A helical transmembrane segment spans residues 346 to 368 (LAIFDFFNWLGYLNSLINPIIYT). The NPxxY motif; important for ligand-induced conformation changes and signaling motif lies at 363–367 (NPIIY). Topologically, residues 369–388 (KSNDDFKQAFQKLMRFRRTS) are cytoplasmic.

This sequence belongs to the G-protein coupled receptor 1 family. In terms of assembly, homodimer. Heterodimer with HTR1D. In terms of processing, phosphorylated. Desensitization of the receptor may be mediated by its phosphorylation. Post-translationally, palmitoylated.

The protein resides in the cell membrane. Its function is as follows. G-protein coupled receptor for 5-hydroxytryptamine (serotonin). Also functions as a receptor for ergot alkaloid derivatives, various anxiolytic and antidepressant drugs and other psychoactive substances, such as lysergic acid diethylamide (LSD). Ligand binding causes a conformation change that triggers signaling via guanine nucleotide-binding proteins (G proteins) and modulates the activity of downstream effectors, such as adenylate cyclase. HTR1B is coupled to G(i)/G(o) G alpha proteins and mediates inhibitory neurotransmission by inhibiting adenylate cyclase activity. Arrestin family members inhibit signaling via G proteins and mediate activation of alternative signaling pathways. Regulates the release of 5-hydroxytryptamine, dopamine and acetylcholine in the brain, and thereby affects neural activity, nociceptive processing, pain perception, mood and behavior. Besides, plays a role in vasoconstriction of cerebral arteries. The protein is 5-hydroxytryptamine receptor 1B (HTR1B) of Didelphis virginiana (North American opossum).